The chain runs to 179 residues: Beta-defensin 22 (179 aa).

The signal sequence occupies residues 1–20; that stretch reads MKSLLSTLVIIMFLAHLVTG. 3 disulfide bridges follow: C27/C58, C34/C52, and C38/C59. Residues 105 to 150 are compositionally biased toward low complexity; the sequence is GTPTKTSAPAKTSAPAKTSTTTKASNAAKASTTTKASNAAKASAAT. The tract at residues 105-152 is disordered; that stretch reads GTPTKTSAPAKTSAPAKTSTTTKASNAAKASTTTKASNAAKASAATMA.

The protein belongs to the beta-defensin family. O-glycosylated; glycans contain alpha(2,3)-linked sialic acids. In terms of tissue distribution, specifically expressed in corpus epididymis and cauda epididymis with expression in corpus being highest (at protein level). Not detected in other tissues tested, including testis, prostate, seminal vesicle and vas deferens (at protein level).

Its subcellular location is the cytoplasmic vesicle. The protein resides in the secretory vesicle. It is found in the acrosome. The protein localises to the secreted. It localises to the extracellular space. Its function is as follows. Probable component of sperm glycocalyx. Likely protects and facilitates transport of sperm in the female reproductive tract. Probably released from the sperm surface during capacitation. The polypeptide is Beta-defensin 22 (Mus musculus (Mouse)).